A 445-amino-acid polypeptide reads, in one-letter code: Proline--tRNA ligase (445 aa).

It belongs to the class-II aminoacyl-tRNA synthetase family. ProS type 2 subfamily. In terms of assembly, homodimer.

The protein localises to the cytoplasm. It catalyses the reaction tRNA(Pro) + L-proline + ATP = L-prolyl-tRNA(Pro) + AMP + diphosphate. Functionally, catalyzes the attachment of proline to tRNA(Pro) in a two-step reaction: proline is first activated by ATP to form Pro-AMP and then transferred to the acceptor end of tRNA(Pro). The protein is Proline--tRNA ligase of Cereibacter sphaeroides (strain ATCC 17025 / ATH 2.4.3) (Rhodobacter sphaeroides).